Consider the following 139-residue polypeptide: MSGRGKAVSKTRAKAKTRSSRAGLQFPVGRVHRLLRKGNYAHRVGAGAPVYLAAVLEYLTAEILELAGNAARDNKKSRIIPRHLQLAVRNDEELNKLLGGVTIAQGGVLPNIQAVLLPKKSSGGVSTSGKKSSQQSQEY.

Disordered regions lie at residues 1-21 and 119-139; these read MSGR…RSSR and KKSS…SQEY. Ser-2 is modified (N-acetylserine). Residue Ser-2 is modified to Phosphoserine. Residues 7 to 19 are compositionally biased toward basic residues; the sequence is AVSKTRAKAKTRS. N6-lactoyllysine; alternate is present on Lys-10. Glycyl lysine isopeptide (Lys-Gly) (interchain with G-Cter in ubiquitin) cross-links involve residues Lys-14, Lys-16, and Lys-120. Residue Ser-136 is modified to Phosphoserine. The [ST]-Q motif motif lies at 136–137; it reads SQ. Tyr-139 is subject to Phosphotyrosine; by WSTF.

It belongs to the histone H2A family. The nucleosome is a histone octamer containing two molecules each of H2A, H2B, H3 and H4 assembled in one H3-H4 heterotetramer and two H2A-H2B heterodimers. The octamer wraps approximately 147 bp of DNA. Interacts with numerous proteins required for DNA damage signaling and repair when phosphorylated on Ser-136. Post-translationally, phosphorylated. Phosphorylation of Ser-136 (H2AX139ph) occurs in response to DNA double strand breaks (DSBs) generated by exogenous genotoxic agents, by stalled replication forks and by meiotic recombination events. Phosphorylation is dependent on the DNA damage checkpoint kinases ATR and ATM, spreads on either side of a detected DSB site and may mark the surrounding chromatin for recruitment of proteins required for DNA damage signaling and repair. Widespread phosphorylation may also serve to amplify the damage signal or aid repair of persistent lesions. Dephosphorylation of Ser-136 is required for DNA DSB repair. Phosphorylation at Tyr-139 (H2AXY142ph) by baz1b/wstf determines the relative recruitment of either DNA repair or pro-apoptotic factors. Phosphorylation at Tyr-139 (H2AXY142ph) favors the recruitment of pro-apoptosis factors. In contrast, dephosphorylation of Tyr-139 by EYA proteins (eya1, eya2, eya3 or eya4) favors the recruitment of MDC1-containing DNA repair complexes to the tail of phosphorylated Ser-136 (H2AX139ph). Phosphorylated by VRK1. Monoubiquitination of Lys-120 (H2AXK119ub) by ring1 and rnf2/ring2 complex gives a specific tag for epigenetic transcriptional repression. Following DNA double-strand breaks (DSBs), it is ubiquitinated through 'Lys-63' linkage of ubiquitin moieties by the E2 ligase ube2n and the E3 ligases rnf8 and rnf168, leading to the recruitment of repair proteins to sites of DNA damage. Ubiquitination at Lys-14 and Lys-16 (H2AK13Ub and H2AK15Ub, respectively) in response to DNA damage is initiated by rnf168 that mediates monoubiquitination at these 2 sites, and 'Lys-63'-linked ubiquitin are then conjugated to monoubiquitin; rnf8 is able to extend 'Lys-63'-linked ubiquitin chains in vitro. H2AK119Ub and ionizing radiation-induced 'Lys-63'-linked ubiquitination (H2AK13Ub and H2AK15Ub) are distinct events.

The protein resides in the nucleus. It localises to the chromosome. In terms of biological role, variant histone H2A which replaces conventional H2A in a subset of nucleosomes. Nucleosomes wrap and compact DNA into chromatin, limiting DNA accessibility to the cellular machineries which require DNA as a template. Histones thereby play a central role in transcription regulation, DNA repair, DNA replication and chromosomal stability. DNA accessibility is regulated via a complex set of post-translational modifications of histones, also called histone code, and nucleosome remodeling. Required for checkpoint-mediated arrest of cell cycle progression in response to low doses of ionizing radiation and for efficient repair of DNA double strand breaks (DSBs) specifically when modified by C-terminal phosphorylation. This is Histone H2AX (h2ax) from Xenopus laevis (African clawed frog).